The sequence spans 284 residues: uncharacterized protein (284 aa).

A signal peptide spans 1–23 (MKRGCAIAVMICGLITSVSAASA).

Belongs to the surface antigen msp4 family.

This is an uncharacterized protein from Brucella suis biovar 1 (strain 1330).